We begin with the raw amino-acid sequence, 754 residues long: Endothelin-converting enzyme 1 (754 aa).

Topologically, residues 1–52 are cytoplasmic; that stretch reads MMSTYKRATLDEEDLVDSLSESDVYPNHLQVNFRGPRNGQRCWAARTPVEKR. Threonine 9 is modified (phosphothreonine). Residues 53 to 73 traverse the membrane as a helical; Signal-anchor for type II membrane protein segment; it reads LVVLVALLAAALVACLAVLGI. The Extracellular segment spans residues 74-754; it reads QYQTRTPSVC…MNPHHKCEVW (681 aa). Residues 82 to 754 form the Peptidase M13 domain; that stretch reads VCLSEACISV…MNPHHKCEVW (673 aa). Disulfide bonds link cysteine 83–cysteine 88, cysteine 106–cysteine 739, cysteine 114–cysteine 699, cysteine 169–cysteine 419, and cysteine 628–cysteine 751. N-linked (GlcNAc...) asparagine glycans are attached at residues asparagine 150, asparagine 171, asparagine 194, asparagine 254, asparagine 300, asparagine 346, asparagine 367, and asparagine 523. Histidine 591 is a binding site for Zn(2+). Residue glutamate 592 is part of the active site. Histidine 595 is a binding site for Zn(2+). N-linked (GlcNAc...) asparagine glycosylation is found at asparagine 616 and asparagine 635. Position 651 (glutamate 651) interacts with Zn(2+). Aspartate 655 serves as the catalytic Proton donor.

This sequence belongs to the peptidase M13 family. In terms of assembly, homodimer; disulfide-linked. Interacts with PPP1R16B. Interacts with TSPAN8; this interaction recruits the endothelin converting enzyme ECE1 to tetraspanin-enriched microdomains and positively modulates its enzymatic activity. It depends on Zn(2+) as a cofactor.

It is found in the cell membrane. The enzyme catalyses Hydrolysis of the 21-Trp-|-Val-22 bond in big endothelin to form endothelin 1.. With respect to regulation, inhibited by phosphoramidon. In terms of biological role, converts big endothelin-1 to endothelin-1. In Bos taurus (Bovine), this protein is Endothelin-converting enzyme 1 (ECE1).